Consider the following 1548-residue polypeptide: Dicer-like protein 1 (1548 aa).

Over residues M1–K41 the composition is skewed to basic and acidic residues. Positions M1–K48 are disordered. In terms of domain architecture, Helicase ATP-binding spans L106–L289. L119–T126 is an ATP binding site. The short motif at D232–H235 is the DEAH box element. A Helicase C-terminal domain is found at T428–L589. The 95-residue stretch at S624–V718 folds into the Dicer dsRNA-binding fold domain. Positions P871–P1006 constitute a PAZ domain. RNase III domains are found at residues L1051 to R1197 and A1248 to K1411. Residues E1288, D1397, and E1400 each coordinate Mg(2+). Residues T1445 to S1518 enclose the DRBM domain. Residues C1457, H1489, C1530, and C1532 each coordinate Zn(2+).

This sequence belongs to the helicase family. Dicer subfamily. It depends on Mg(2+) as a cofactor. Requires Mn(2+) as cofactor.

Its function is as follows. Dicer-like endonuclease involved in cleaving double-stranded RNA in the RNA interference (RNAi) pathway. Produces 21 to 25 bp dsRNAs (siRNAs) which target the selective destruction of homologous RNAs leading to sequence-specific suppression of gene expression, called post-transcriptional gene silencing (PTGS). Part of a broad host defense response against viral infection and transposons. This Cryphonectria parasitica (Chestnut blight fungus) protein is Dicer-like protein 1 (DCL-1).